Reading from the N-terminus, the 600-residue chain is Probable methyltransferase PMT7 (600 aa).

Topologically, residues Met1 to Gln15 are cytoplasmic. Residues Met16–Asn36 form a helical; Signal-anchor for type II membrane protein membrane-spanning segment. The Lumenal portion of the chain corresponds to Asn37 to Leu600. Asn49, Asn98, Asn110, Asn157, Asn200, Asn204, Asn334, Asn447, and Asn484 each carry an N-linked (GlcNAc...) asparagine glycan.

Belongs to the methyltransferase superfamily.

Its subcellular location is the golgi apparatus membrane. The chain is Probable methyltransferase PMT7 from Arabidopsis thaliana (Mouse-ear cress).